The primary structure comprises 189 residues: Probable nicotinate-nucleotide adenylyltransferase (189 aa).

It belongs to the NadD family.

The enzyme catalyses nicotinate beta-D-ribonucleotide + ATP + H(+) = deamido-NAD(+) + diphosphate. It functions in the pathway cofactor biosynthesis; NAD(+) biosynthesis; deamido-NAD(+) from nicotinate D-ribonucleotide: step 1/1. Functionally, catalyzes the reversible adenylation of nicotinate mononucleotide (NaMN) to nicotinic acid adenine dinucleotide (NaAD). In Caulobacter sp. (strain K31), this protein is Probable nicotinate-nucleotide adenylyltransferase.